We begin with the raw amino-acid sequence, 220 residues long: Elongation factor Ts (220 aa).

Residues 83-86 (TDFV) form an involved in Mg(2+) ion dislocation from EF-Tu region.

It belongs to the EF-Ts family.

It localises to the cytoplasm. Associates with the EF-Tu.GDP complex and induces the exchange of GDP to GTP. It remains bound to the aminoacyl-tRNA.EF-Tu.GTP complex up to the GTP hydrolysis stage on the ribosome. In Synechococcus sp. (strain CC9605), this protein is Elongation factor Ts.